The primary structure comprises 717 residues: Cleavage stimulation factor subunit 3 (717 aa).

Ser-2 carries the post-translational modification N-acetylserine. 9 HAT repeats span residues 45-77 (QPID…AEIK), 79-110 (KNYD…YVRE), 117-152 (SYKE…FLKG), 163-196 (QRIT…YEEG), 221-261 (KEYE…WEKS), 271-303 (LITK…YLEQ), 319-352 (LFSD…YEES), 354-387 (MKYE…FARR), and 458-494 (NEDN…FESN). Residues 683-704 (AVKRPNEDSDEDEEKGAVVPPV) are disordered. Ser-691 is subject to Phosphoserine.

Homodimer. The CSTF complex is composed of CSTF1 (50 kDa subunit), CSTF2 (64 kDa subunit) and CSTF3 (77 kDa subunit). CSTF3 directly interacts with CSTF1 and CSTF2. Interacts with FIP1L1.

The protein resides in the nucleus. Its function is as follows. One of the multiple factors required for polyadenylation and 3'-end cleavage of mammalian pre-mRNAs. This is Cleavage stimulation factor subunit 3 (Cstf3) from Mus musculus (Mouse).